A 274-amino-acid polypeptide reads, in one-letter code: MDVVLLVKAAIMGVVEGLTEFLPISSTGHLILAGALLGFDDAKAQVFDVAIQTGAILAVILVYWAKIRATLHALPSERQAQRLAFNLAIGFFPAVLLGLLFGKAIKAHLFTPVVVASTFIIGGLVILWAERRAPAATRIHTLDAMTAPDALKVGLVQCLAMVPGTSRSGATIIGGMLLGLSRQAATDFSFFLAIPTLIGAGVYSLYQERALLTVADLPMFLTGLVFSFLSAWLCVRWLLRYIASHSFVPFAYYRIGFGLMVLVTASTGWVPWVD.

7 helical membrane-spanning segments follow: residues 21–39 (FLPI…LLGF), 44–64 (AQVF…LVYW), 85–105 (FNLA…GKAI), 109–129 (LFTP…ILWA), 185–205 (ATDF…VYSL), 214–234 (VADL…AWLC), and 247–267 (FVPF…TAST).

Belongs to the UppP family.

It is found in the cell inner membrane. The enzyme catalyses di-trans,octa-cis-undecaprenyl diphosphate + H2O = di-trans,octa-cis-undecaprenyl phosphate + phosphate + H(+). Functionally, catalyzes the dephosphorylation of undecaprenyl diphosphate (UPP). Confers resistance to bacitracin. This chain is Undecaprenyl-diphosphatase, found in Verminephrobacter eiseniae (strain EF01-2).